Reading from the N-terminus, the 896-residue chain is Translation initiation factor IF-2 (896 aa).

Disordered stretches follow at residues Leu-32–Pro-99 and Glu-117–Glu-304. A compositionally biased stretch (polar residues) spans Ala-35–Ala-48. Residues Thr-153–Pro-169 show a composition bias toward basic and acidic residues. A compositionally biased stretch (low complexity) spans Ala-203–Pro-214. Polar residues predominate over residues Arg-215 to Gln-227. The span at Pro-228 to Ser-241 shows a compositional bias: low complexity. Over residues Arg-256 to Gly-280 the composition is skewed to basic and acidic residues. Positions Ile-401–Lys-570 constitute a tr-type G domain. Residues Gly-410–Thr-417 form a G1 region. Position 410–417 (Gly-410–Thr-417) interacts with GTP. Positions Ala-435 to His-439 are G2. Positions Asp-456–Gly-459 are G3. GTP contacts are provided by residues Asp-456–His-460 and Asn-510–Asp-513. A G4 region spans residues Asn-510 to Asp-513. The G5 stretch occupies residues Ser-546–Lys-548.

Belongs to the TRAFAC class translation factor GTPase superfamily. Classic translation factor GTPase family. IF-2 subfamily.

Its subcellular location is the cytoplasm. In terms of biological role, one of the essential components for the initiation of protein synthesis. Protects formylmethionyl-tRNA from spontaneous hydrolysis and promotes its binding to the 30S ribosomal subunits. Also involved in the hydrolysis of GTP during the formation of the 70S ribosomal complex. In Chlamydia trachomatis serovar L2 (strain ATCC VR-902B / DSM 19102 / 434/Bu), this protein is Translation initiation factor IF-2.